Reading from the N-terminus, the 1033-residue chain is Integrin alpha-IIb (1033 aa).

The first 31 residues, 1-31 (MARASCAWHSLWLLQWTPLFLGPSAVPPVWA), serve as a signal peptide directing secretion. Topologically, residues 32–988 (LNLDSEKFSV…TQLLRALEER (957 aa)) are extracellular. FG-GAP repeat units follow at residues 35-96 (DSEK…GGKC), 109-173 (NLGF…GRAE), 184-237 (SVYA…ISSY), 252-304 (TYDN…DSYY), 305-370 (QPLH…PQAL), 372-431 (TPTL…GLSP), and 434-495 (SQVL…VQDS). Residues Asn-46 and Asn-75 are each glycosylated (N-linked (GlcNAc...) asparagine). Intrachain disulfides connect Cys-87-Cys-96, Cys-138-Cys-161, and Cys-177-Cys-197. Residues Glu-273, Asp-275, Asp-277, Thr-280, Glu-282, Asp-327, Asn-329, Asp-331, Arg-333, Asp-335, Asp-395, Asp-399, Tyr-401, Asp-403, Asp-456, Asp-458, Asn-460, Tyr-462, and Asp-464 each contribute to the Ca(2+) site. Intrachain disulfides connect Cys-503/Cys-514 and Cys-520/Cys-575. Asn-600 is a glycosylation site (N-linked (GlcNAc...) asparagine). 4 disulfides stabilise this stretch: Cys-632/Cys-638, Cys-704/Cys-717, Cys-856/Cys-916, and Cys-905/Cys-911. The N-linked (GlcNAc...) asparagine glycan is linked to Asn-710. A glycan (N-linked (GlcNAc...) asparagine) is linked at Asn-957. The helical transmembrane segment at 989 to 1014 (AIPVWWVLVGVLGGLLLLTLLVLAMW) threads the bilayer. The Cytoplasmic segment spans residues 1015–1033 (KAGFFKRNRPPLEEDEEEE). The GFFKR motif motif lies at 1017–1021 (GFFKR).

The protein belongs to the integrin alpha chain family. As to quaternary structure, heterodimer of an alpha and a beta subunit. The alpha subunit is composed of a heavy and a light chain linked by a disulfide bond. Alpha-IIb associates with beta-3. Directly interacts with RNF181. Interacts (via C-terminus cytoplasmic tail region) with CIB1; the interaction is direct and calcium-dependent. Interacts (via C-terminus cytoplasmic tail region) with CIB2, CIB3 and CIB4; the interactions are stabilized/increased in a calcium and magnesium-dependent manner. ITGA2B:ITGB3 interacts with PPIA/CYPA; the interaction is ROS and PPIase activity-dependent and is increased in the presence of thrombin. ITGA2B:ITGB3 interacts with SELP (via C-type lectin domain); the interaction mediates cell-cell interaction and adhesion. Post-translationally, cleaved by ELANE; the cleavage promotes activation of platelet fibrinogen receptor integrin alpha-IIb/beta-3.

The protein resides in the membrane. Integrin alpha-IIb/beta-3 is a receptor for fibronectin, fibrinogen, plasminogen, prothrombin, thrombospondin and vitronectin. It recognizes the sequence R-G-D in a wide array of ligands. It recognizes the sequence H-H-L-G-G-G-A-K-Q-A-G-D-V in fibrinogen gamma chain. Following activation integrin alpha-IIb/beta-3 brings about platelet/platelet interaction through binding of soluble fibrinogen. This step leads to rapid platelet aggregation which physically plugs ruptured endothelial cell surface. In Mus musculus (Mouse), this protein is Integrin alpha-IIb (Itga2b).